Here is a 199-residue protein sequence, read N- to C-terminus: Thymidylate kinase (199 aa).

An ATP-binding site is contributed by 7 to 14 (GIDGSGKS).

This sequence belongs to the thymidylate kinase family.

The enzyme catalyses dTMP + ATP = dTDP + ADP. Functionally, phosphorylation of dTMP to form dTDP in both de novo and salvage pathways of dTTP synthesis. In Neorickettsia sennetsu (strain ATCC VR-367 / Miyayama) (Ehrlichia sennetsu), this protein is Thymidylate kinase.